Consider the following 299-residue polypeptide: uncharacterized protein (299 aa).

This is an uncharacterized protein from Mycobacterium tuberculosis (strain CDC 1551 / Oshkosh).